The primary structure comprises 688 residues: Probable glucan endo-1,3-beta-glucosidase btgC (688 aa).

Disordered regions lie at residues 1–49 (MSGP…MNGQ), 61–91 (DGRQ…NLGP), and 169–194 (QLTP…DIPY). Residues 1 to 307 (MSGPNRTYSF…PKPGGGNKKR (307 aa)) lie on the Cytoplasmic side of the membrane. Positions 175 to 188 (SVSHLSSTNPSQRN) are enriched in polar residues. A helical; Signal-anchor for type II membrane protein membrane pass occupies residues 308 to 328 (GWIVGAILAFIIIGAIVGGAV). Residues 329–688 (GGTIGHRGNE…IPDCGGKTAT (360 aa)) lie on the Extracellular side of the membrane. Residues 334–363 (HRGNEEPSSASSASSSSTQTATEDTSVNGD) are disordered. Residues 341 to 355 (SSASSASSSSTQTAT) show a composition bias toward low complexity. N-linked (GlcNAc...) asparagine glycans are attached at residues asparagine 408, asparagine 431, and asparagine 459. Glutamate 491 (proton donor) is an active-site residue. The active-site Nucleophile is the glutamate 590. N-linked (GlcNAc...) asparagine glycans are attached at residues asparagine 609 and asparagine 635.

It belongs to the glycosyl hydrolase 17 family.

The protein resides in the cell membrane. It carries out the reaction Hydrolysis of (1-&gt;3)-beta-D-glucosidic linkages in (1-&gt;3)-beta-D-glucans.. In terms of biological role, glucanases play a role in cell expansion during growth, in cell-cell fusion during mating, and in spore release during sporulation. This enzyme may be involved in beta-glucan degradation. Active on laminarin and lichenan. This Aspergillus fumigatus (strain CBS 144.89 / FGSC A1163 / CEA10) (Neosartorya fumigata) protein is Probable glucan endo-1,3-beta-glucosidase btgC (btgC).